A 156-amino-acid chain; its full sequence is Ribosomal RNA large subunit methyltransferase H (156 aa).

Residues Gly-104 and 123 to 128 contribute to the S-adenosyl-L-methionine site; that span reads LSPMVM.

It belongs to the RNA methyltransferase RlmH family. As to quaternary structure, homodimer.

Its subcellular location is the cytoplasm. It carries out the reaction pseudouridine(1915) in 23S rRNA + S-adenosyl-L-methionine = N(3)-methylpseudouridine(1915) in 23S rRNA + S-adenosyl-L-homocysteine + H(+). In terms of biological role, specifically methylates the pseudouridine at position 1915 (m3Psi1915) in 23S rRNA. The sequence is that of Ribosomal RNA large subunit methyltransferase H from Bdellovibrio bacteriovorus (strain ATCC 15356 / DSM 50701 / NCIMB 9529 / HD100).